Consider the following 370-residue polypeptide: Putative phosphoserine aminotransferase (370 aa).

A disordered region spans residues 1–22; it reads MAELTIPADLKPRDGRFGSGPS. Arg44 lines the L-glutamate pocket. Residues Phe102, Thr148, Asp170, and Gln193 each contribute to the pyridoxal 5'-phosphate site. An N6-(pyridoxal phosphate)lysine modification is found at Lys194. 245 to 246 lines the pyridoxal 5'-phosphate pocket; it reads NT.

This sequence belongs to the class-V pyridoxal-phosphate-dependent aminotransferase family. SerC subfamily. In terms of assembly, homodimer. The cofactor is pyridoxal 5'-phosphate.

The protein resides in the cytoplasm. It carries out the reaction O-phospho-L-serine + 2-oxoglutarate = 3-phosphooxypyruvate + L-glutamate. The catalysed reaction is 4-(phosphooxy)-L-threonine + 2-oxoglutarate = (R)-3-hydroxy-2-oxo-4-phosphooxybutanoate + L-glutamate. The protein operates within amino-acid biosynthesis; L-serine biosynthesis; L-serine from 3-phospho-D-glycerate: step 2/3. It functions in the pathway cofactor biosynthesis; pyridoxine 5'-phosphate biosynthesis; pyridoxine 5'-phosphate from D-erythrose 4-phosphate: step 3/5. Its function is as follows. Catalyzes the reversible conversion of 3-phosphohydroxypyruvate to phosphoserine and of 3-hydroxy-2-oxo-4-phosphonooxybutanoate to phosphohydroxythreonine. The protein is Putative phosphoserine aminotransferase of Mycobacterium sp. (strain JLS).